A 214-amino-acid polypeptide reads, in one-letter code: Pyrrolidone-carboxylate peptidase (214 aa).

Catalysis depends on residues E78, C141, and H165.

Belongs to the peptidase C15 family. As to quaternary structure, homotetramer.

It is found in the cytoplasm. The enzyme catalyses Release of an N-terminal pyroglutamyl group from a polypeptide, the second amino acid generally not being Pro.. Removes 5-oxoproline from various penultimate amino acid residues except L-proline. This is Pyrrolidone-carboxylate peptidase from Streptococcus pneumoniae (strain 70585).